The following is an 88-amino-acid chain: Large ribosomal subunit protein bL27 (88 aa).

This sequence belongs to the bacterial ribosomal protein bL27 family.

This is Large ribosomal subunit protein bL27 from Carboxydothermus hydrogenoformans (strain ATCC BAA-161 / DSM 6008 / Z-2901).